A 706-amino-acid polypeptide reads, in one-letter code: MLNPIVRKFQYGQHTVTLETGMMARQATAAVMVSMDDTAVFVTVVGAKNAKPGQSFFPLTVNYQERTYAAGRFPGGFFRREGRPSEGETLTSRLIDRPIRPLFPEGFLNEVQVIATVVSVNPQVSPDIVAMIGASAALSLSGIPFSGPIGVARVGYLNDQYVLNPTTDELKESRLDLVVAGTQGAVLMVESEAELLSEDQMLGAVVFGHEQQQIVIENINSLVAEAGKPKWEWHAPAVNVSLEQRVQALSEARLGDAYRITEKQERYAQVNVIKTDVVAALQAEDETLNAGEIQEILGNIEKNVVRGRVLAGEPRIDGREKDMIRGLDVRTGVLPRTHGSALFTRGETQALVTATLGTERDAQNIDELTGERTDRFLLHYNFPPYCVGETGMVGSPKRREIGHGRLAKRGVLAVMPKANEFPYTVRVVSEITESNGSSSMASVCGASLALMDAGVPIKSAVAGIAMGLVKEGDNFVVLSDILGDEDHLGDMDFKVAGSREGITALQMDIKIEGITREIMQVALNQAKGARLHILGVMEQAISTPRGDISEFAPRIHTIKISTDKIKDVIGKGGSVIRALTEETGTTIEIEDDGTVRIASTDGEKAKHAIRRIEEITAEIEVGRVYQGKVTRIVDFGAFVAIGGGKEGLVHISQIADKRVEKVTDYLQMGQEVPVKVLEVDRQGRVRLSIKEANPQTQEAAAPSSEE.

The Mg(2+) site is built by D486 and D492. A KH domain is found at 553–612; that stretch reads PRIHTIKISTDKIKDVIGKGGSVIRALTEETGTTIEIEDDGTVRIASTDGEKAKHAIRRI. The S1 motif domain occupies 622 to 690; the sequence is GRVYQGKVTR…RQGRVRLSIK (69 aa).

The protein belongs to the polyribonucleotide nucleotidyltransferase family. Component of the RNA degradosome, which is a multiprotein complex involved in RNA processing and mRNA degradation. Requires Mg(2+) as cofactor.

It is found in the cytoplasm. It catalyses the reaction RNA(n+1) + phosphate = RNA(n) + a ribonucleoside 5'-diphosphate. Involved in mRNA degradation. Catalyzes the phosphorolysis of single-stranded polyribonucleotides processively in the 3'- to 5'-direction. The polypeptide is Polyribonucleotide nucleotidyltransferase (Pectobacterium atrosepticum (strain SCRI 1043 / ATCC BAA-672) (Erwinia carotovora subsp. atroseptica)).